The primary structure comprises 397 residues: Transaldolase (397 aa).

Lysine 136 (schiff-base intermediate with substrate) is an active-site residue.

This sequence belongs to the transaldolase family. Type 1 subfamily. In terms of assembly, homodimer.

It is found in the cytoplasm. The catalysed reaction is D-sedoheptulose 7-phosphate + D-glyceraldehyde 3-phosphate = D-erythrose 4-phosphate + beta-D-fructose 6-phosphate. It functions in the pathway carbohydrate degradation; pentose phosphate pathway; D-glyceraldehyde 3-phosphate and beta-D-fructose 6-phosphate from D-ribose 5-phosphate and D-xylulose 5-phosphate (non-oxidative stage): step 2/3. Transaldolase is important for the balance of metabolites in the pentose-phosphate pathway. This Synechococcus sp. (strain ATCC 27144 / PCC 6301 / SAUG 1402/1) (Anacystis nidulans) protein is Transaldolase.